Reading from the N-terminus, the 327-residue chain is Small ribosomal subunit protein RACK1 (327 aa).

WD repeat units follow at residues 13 to 44, 61 to 91, 103 to 133, 148 to 180, 192 to 222, 233 to 262, and 293 to 323; these read AHTDMVTAIATPIDNSDTIVSASRDKSIIVWK, GHSHFVEDVVLSSDGQFALSGSWDGELRLWD, GHTKDVLSVAFSLDNRQIVSASRDRTIKLWN, GHRDWVSCVRFSPNTLQPTIVSASCDKTVKVWN, GHTGYVSTVAVSPDGSLCASGGKDGVVLLWD, EANSVIHALCFTPNRYWLCAATEQGIKIWD, and RKVIYCTSLNWSADGSTLFSGYTDGVIRVWG.

It belongs to the WD repeat G protein beta family. Ribosomal protein RACK1 subfamily.

The sequence is that of Small ribosomal subunit protein RACK1 (GB1) from Brassica napus (Rape).